A 412-amino-acid polypeptide reads, in one-letter code: Dihydrolipoyllysine-residue acetyltransferase component of pyruvate dehydrogenase complex (412 aa).

The Lipoyl-binding domain occupies 2–78 (PIKILMPALS…PVNSLIAVLS (77 aa)). N6-lipoyllysine is present on Lys43. Residues 132 to 169 (FASPLAKRLAKMRNIRFESVKGSGPHGRIVKQDILSYT) enclose the Peripheral subunit-binding (PSBD) domain. Residue His385 is part of the active site.

It belongs to the 2-oxoacid dehydrogenase family. As to quaternary structure, forms a 24-polypeptide structural core with octahedral symmetry. (R)-lipoate serves as cofactor.

The catalysed reaction is N(6)-[(R)-dihydrolipoyl]-L-lysyl-[protein] + acetyl-CoA = N(6)-[(R)-S(8)-acetyldihydrolipoyl]-L-lysyl-[protein] + CoA. In terms of biological role, the pyruvate dehydrogenase complex catalyzes the overall conversion of pyruvate to acetyl-CoA and CO(2). It contains multiple copies of three enzymatic components: pyruvate dehydrogenase (E1), dihydrolipoamide acetyltransferase (E2) and lipoamide dehydrogenase (E3). The polypeptide is Dihydrolipoyllysine-residue acetyltransferase component of pyruvate dehydrogenase complex (pdhC) (Rickettsia conorii (strain ATCC VR-613 / Malish 7)).